The following is a 657-amino-acid chain: LIM and SH3 domain protein Lasp (657 aa).

In terms of domain architecture, LIM zinc-binding spans Lys-3 to Thr-63. 2 Nebulin repeats span residues Ala-64–Gly-95 and Lys-96–Ala-130. Disordered regions lie at residues Ala-130–Ser-151, Pro-164–His-223, Tyr-235–Asp-257, Leu-294–Ala-318, Asn-332–Ser-415, and Lys-460–Ile-528. The span at Val-140–Phe-150 shows a compositional bias: polar residues. Composition is skewed to low complexity over residues Ala-172–Thr-215 and Gln-236–Gln-254. Over residues Asn-332–Val-341 the composition is skewed to polar residues. Positions Asp-342–Gln-357 are enriched in low complexity. Polar residues predominate over residues Ser-358–Gln-370. The segment covering Ser-371–Gln-403 has biased composition (low complexity). The span at Lys-460–His-475 shows a compositional bias: polar residues. Residues Ser-505 and Ser-530 each carry the phosphoserine modification. Residues Glu-548–Ser-592 are disordered. Residues Gln-549–Ser-586 are compositionally biased toward low complexity. Residues Thr-596–Ile-657 enclose the SH3 domain.

In terms of assembly, interacts with osk.

The protein is LIM and SH3 domain protein Lasp of Drosophila melanogaster (Fruit fly).